The chain runs to 159 residues: Alpha-lactalbumin (159 aa).

Positions 1–19 (MMRFVPLFLACISLPAFQA) are cleaved as a signal peptide. Residues 20–142 (TEFTKCEVSH…KLEQWRCEKP (123 aa)) enclose the C-type lysozyme domain. Intrachain disulfides connect Cys25/Cys139, Cys47/Cys130, Cys80/Cys96, and Cys92/Cys110. Asn64 carries an N-linked (GlcNAc...) asparagine glycan. Residues Lys98, Asp101, Asp106, and Asp107 each coordinate Ca(2+).

This sequence belongs to the glycosyl hydrolase 22 family. In terms of assembly, lactose synthase (LS) is a heterodimer of a catalytic component, beta1,4-galactosyltransferase (beta4Gal-T1) and a regulatory component, alpha-lactalbumin (LA). In terms of tissue distribution, mammary gland specific. Secreted in milk.

The protein localises to the secreted. Regulatory subunit of lactose synthase, changes the substrate specificity of galactosyltransferase in the mammary gland making glucose a good acceptor substrate for this enzyme. This enables LS to synthesize lactose, the major carbohydrate component of milk. In other tissues, galactosyltransferase transfers galactose onto the N-acetylglucosamine of the oligosaccharide chains in glycoproteins. The sequence is that of Alpha-lactalbumin (Lalba) from Rattus norvegicus (Rat).